Here is a 659-residue protein sequence, read N- to C-terminus: DNA ligase (659 aa).

NAD(+) is bound by residues 32–36, 81–82, and E110; these read DAEYD and SL. K112 acts as the N6-AMP-lysine intermediate in catalysis. Residues R133, E168, K284, and K308 each contribute to the NAD(+) site. 4 residues coordinate Zn(2+): C402, C405, C420, and C425. Positions 582 to 659 constitute a BRCT domain; it reads AKPQIFAGKS…SEEEFAELLP (78 aa).

Belongs to the NAD-dependent DNA ligase family. LigA subfamily. Mg(2+) serves as cofactor. Requires Mn(2+) as cofactor.

The catalysed reaction is NAD(+) + (deoxyribonucleotide)n-3'-hydroxyl + 5'-phospho-(deoxyribonucleotide)m = (deoxyribonucleotide)n+m + AMP + beta-nicotinamide D-nucleotide.. DNA ligase that catalyzes the formation of phosphodiester linkages between 5'-phosphoryl and 3'-hydroxyl groups in double-stranded DNA using NAD as a coenzyme and as the energy source for the reaction. It is essential for DNA replication and repair of damaged DNA. The protein is DNA ligase of Desulfitobacterium hafniense (strain Y51).